We begin with the raw amino-acid sequence, 131 residues long: Large ribosomal subunit protein bL17 (131 aa).

The protein belongs to the bacterial ribosomal protein bL17 family. As to quaternary structure, part of the 50S ribosomal subunit. Contacts protein L32.

The polypeptide is Large ribosomal subunit protein bL17 (Burkholderia multivorans (strain ATCC 17616 / 249)).